We begin with the raw amino-acid sequence, 344 residues long: Anthranilate phosphoribosyltransferase (344 aa).

5-phospho-alpha-D-ribose 1-diphosphate is bound by residues G84, 87–88, T92, 94–97, 112–120, and S124; these read GD, NIST, and KHGNRSVSS. G84 is an anthranilate binding site. Mg(2+) is bound at residue S96. N115 is an anthranilate binding site. Position 170 (R170) interacts with anthranilate. The Mg(2+) site is built by D229 and E230.

The protein belongs to the anthranilate phosphoribosyltransferase family. In terms of assembly, homodimer. Mg(2+) is required as a cofactor.

The catalysed reaction is N-(5-phospho-beta-D-ribosyl)anthranilate + diphosphate = 5-phospho-alpha-D-ribose 1-diphosphate + anthranilate. It participates in amino-acid biosynthesis; L-tryptophan biosynthesis; L-tryptophan from chorismate: step 2/5. Its function is as follows. Catalyzes the transfer of the phosphoribosyl group of 5-phosphorylribose-1-pyrophosphate (PRPP) to anthranilate to yield N-(5'-phosphoribosyl)-anthranilate (PRA). The chain is Anthranilate phosphoribosyltransferase from Xylella fastidiosa (strain 9a5c).